The sequence spans 389 residues: Nucleic acid dioxygenase ALKBH1 (389 aa).

The segment at 1–127 (MGKMAAAVAS…CLKLYSQKPN (127 aa)) is interaction with DNAJB6. The tRNA-binding stretch occupies residues 86 to 389 (SKWRAYGLEG…VKRKRLNPNS (304 aa)). Substrate-binding positions include Trp144 and 175–177 (YHY). The 135-residue stretch at 213–347 (QAEAGILNYY…RVNMTVRQVL (135 aa)) folds into the Fe2OG dioxygenase domain. 220–222 (NYY) lines the 2-oxoglutarate pocket. The Fe cation site is built by His231, Asp233, and His287. Asp233 serves as a coordination point for substrate. 338 to 344 (RVNMTVR) is a 2-oxoglutarate binding site.

Monomer. Interacts with DNAJB6. Fe(2+) serves as cofactor. In adult organs, highly expressed in testis, eye, brain and kidney.

The protein localises to the nucleus. The catalysed reaction is an N(6)-methyl-2'-deoxyadenosine in DNA + 2-oxoglutarate + O2 = a 2'-deoxyadenosine in DNA + formaldehyde + succinate + CO2. It carries out the reaction 2'-deoxyribonucleotide-(2'-deoxyribose 5'-phosphate)-2'-deoxyribonucleotide-DNA = a 3'-end 2'-deoxyribonucleotide-(2,3-dehydro-2,3-deoxyribose 5'-phosphate)-DNA + a 5'-end 5'-phospho-2'-deoxyribonucleoside-DNA + H(+). It catalyses the reaction a methylated nucleobase within DNA + 2-oxoglutarate + O2 = a nucleobase within DNA + formaldehyde + succinate + CO2. The enzyme catalyses an N(1)-methyladenosine in tRNA + 2-oxoglutarate + O2 = an adenosine in tRNA + formaldehyde + succinate + CO2. The catalysed reaction is 5-methylcytidine(34) in mitochondrial tRNA(Met) + 2 2-oxoglutarate + 2 O2 = 5-formylcytidine(34) in mitochondrial tRNA(Met) + 2 succinate + 2 CO2 + H2O. It carries out the reaction an N(3)-methylcytidine in mRNA + 2-oxoglutarate + O2 = a cytidine in mRNA + formaldehyde + succinate + CO2. It catalyses the reaction N(1)-methyladenosine(58) in tRNA + 2-oxoglutarate + O2 = adenosine(58) in tRNA + formaldehyde + succinate + CO2. In terms of biological role, dioxygenase that acts on nucleic acids, such as DNA and tRNA. Requires molecular oxygen, alpha-ketoglutarate and iron. A number of activities have been described for this dioxygenase, but recent results suggest that it mainly acts on tRNAs and mediates their demethylation or oxidation depending on the context and subcellular compartment. Mainly acts as a tRNA demethylase by removing N(1)-methyladenine from various tRNAs, with a preference for N(1)-methyladenine at position 58 (m1A58) present on a stem loop structure of tRNAs. Acts as a regulator of translation initiation and elongation in response to glucose deprivation: regulates both translation initiation, by mediating demethylation of tRNA(Met), and translation elongation, N(1)-methyladenine-containing tRNAs being preferentially recruited to polysomes to promote translation elongation. In mitochondrion, specifically interacts with mt-tRNA(Met) and mediates oxidation of mt-tRNA(Met) methylated at cytosine(34) to form 5-formylcytosine (f(5)c) at this position. mt-tRNA(Met) containing the f(5)c modification at the wobble position enables recognition of the AUA codon in addition to the AUG codon, expanding codon recognition in mitochondrial translation. Specifically demethylates DNA methylated on the 6th position of adenine (N(6)-methyladenosine) DNA. N(6)-methyladenosine (m6A) DNA is present at some L1 elements in embryonic stem cells and probably promotes their silencing. Demethylates mRNAs containing N(3)-methylcytidine modification. Also able to repair alkylated single-stranded DNA by oxidative demethylation, but with low activity. Also has DNA lyase activity and introduces double-stranded breaks at abasic sites: cleaves both single-stranded DNA and double-stranded DNA at abasic sites, with the greatest activity towards double-stranded DNA with two abasic sites. DNA lyase activity does not require alpha-ketoglutarate and iron and leads to the formation of an irreversible covalent protein-DNA adduct with the 5' DNA product. DNA lyase activity is not required during base excision repair and class switch recombination of the immunoglobulin heavy chain during B lymphocyte activation. May play a role in placental trophoblast lineage differentiation. In Mus musculus (Mouse), this protein is Nucleic acid dioxygenase ALKBH1.